The primary structure comprises 309 residues: Glycine-rich RNA-binding protein 3, mitochondrial (309 aa).

Residues 1–37 (MAFLSKFGNILKQTTNKQLNAQVSLSSPSLFQAIRCM) constitute a mitochondrion transit peptide. Positions 40-118 (SKLFIGGMAY…RVVKVNYAND (79 aa)) constitute an RRM domain. The segment at 247 to 309 (FAGDSQFGGS…GEFEDVAKRA (63 aa)) is disordered. Residues 258–273 (VGNSSQFGGDNTQFTA) show a composition bias toward polar residues.

This sequence belongs to the GR-RBP family. Homodimer. Interacts with ORRM2 and MORF8/RIP1. Interacts with RBG5/ORRM4. Binds to RBG2/ORRM5.

It localises to the mitochondrion. Its function is as follows. Possibly has a role in RNA transcription or processing during stress. Involved in C-to-U editing of mitochondrial RNA. Functions as a minor mitochondrial editing factor. Controls 6 percent of the mitochondrial editing sites. In Arabidopsis thaliana (Mouse-ear cress), this protein is Glycine-rich RNA-binding protein 3, mitochondrial.